Reading from the N-terminus, the 298-residue chain is Small ribosomal subunit protein uS2 (298 aa).

It belongs to the universal ribosomal protein uS2 family.

The chain is Small ribosomal subunit protein uS2 from Leifsonia xyli subsp. xyli (strain CTCB07).